Consider the following 35-residue polypeptide: Kappa-theraphotoxin-Tb1a (35 aa).

3 disulfide bridges follow: cysteine 3–cysteine 18, cysteine 10–cysteine 23, and cysteine 17–cysteine 30.

It belongs to the neurotoxin 10 (Hwtx-1) family. 59 (Tltx) subfamily. In terms of assembly, monomer. In terms of tissue distribution, expressed by the venom gland.

Its subcellular location is the secreted. Its function is as follows. Blocks Kv4.2/KCND2 voltage-gated potassium channels (IC(50) is 193.0 nM) by shifting the voltage-dependence of channel activation to more depolarized potentials. The toxin is thought to bind to the S3-S4 linker region of the voltage sensor domain. This chain is Kappa-theraphotoxin-Tb1a, found in Theraphosa blondi (Goliath birdeating spider).